Consider the following 342-residue polypeptide: MENILDFTLEELKEWLISKEEKAFRAKQVFDWIYNKLIFDFNNMKNIPYKTKNLLSDNFYIGVPKVVKKLMSQDKNTYKFLFEYKDGNIIESVVMKYKHGNSICVSTQVGCRMGCKFCASTLDGVIRNLTSGEILSQIMAAQKEIGERISNVVLMGSGEPLDNFENVTKFLDLVTSDTTLNIGQRHITLSTCGIVPKIKELADKNYNITLAISLHSPEDLLRKEMMPIANKYSIKELMEACDYYINKTNRRITFEYALVKGKNDSIKEAKKLSTVLKGKLCHVNLIPVNEIKENSYEKSTLKNIESFGNILKENGIETTIRREMGADINAACGQLRRSYVSK.

Glu91 serves as the catalytic Proton acceptor. The Radical SAM core domain occupies 97–327; it reads YKHGNSICVS…TTIRREMGAD (231 aa). A disulfide bond links Cys104 and Cys332. 3 residues coordinate [4Fe-4S] cluster: Cys111, Cys115, and Cys118. S-adenosyl-L-methionine contacts are provided by residues 158–159, Ser190, 213–215, and Asn289; these read GE and SLH. Cys332 functions as the S-methylcysteine intermediate in the catalytic mechanism.

This sequence belongs to the radical SAM superfamily. RlmN family. The cofactor is [4Fe-4S] cluster.

It is found in the cytoplasm. The enzyme catalyses adenosine(2503) in 23S rRNA + 2 reduced [2Fe-2S]-[ferredoxin] + 2 S-adenosyl-L-methionine = 2-methyladenosine(2503) in 23S rRNA + 5'-deoxyadenosine + L-methionine + 2 oxidized [2Fe-2S]-[ferredoxin] + S-adenosyl-L-homocysteine. The catalysed reaction is adenosine(37) in tRNA + 2 reduced [2Fe-2S]-[ferredoxin] + 2 S-adenosyl-L-methionine = 2-methyladenosine(37) in tRNA + 5'-deoxyadenosine + L-methionine + 2 oxidized [2Fe-2S]-[ferredoxin] + S-adenosyl-L-homocysteine. In terms of biological role, specifically methylates position 2 of adenine 2503 in 23S rRNA and position 2 of adenine 37 in tRNAs. This chain is Probable dual-specificity RNA methyltransferase RlmN, found in Clostridium botulinum (strain Okra / Type B1).